The following is a 75-amino-acid chain: Protein EGO2 (75 aa).

The protein is Protein EGO2 of Saccharomyces cerevisiae (strain ATCC 204508 / S288c) (Baker's yeast).